The chain runs to 355 residues: MAAAAATAPAAAVVRRMKLGSQGMEVSAQGLGCMGMSAVYGERKPEADMVALVRHAVAAGVTFLDTSDVYGPHTNEVLVGKAVAAAAATEEEVQVQVATKFGITPAWEVRGDPAYVRAACEGSLRRLGVGCIDLYYQHRIDSTVPVEITMGELKKLVEEGKIKYIGLSEASASTIRRAHVVHPITAVQIEWSLWSRDVEEDIVPTCRELGIGIVAYSPLGRGFFSSGAKLVDELPDDDFRKSLPRFQPENLEKNAAIFEKVNAMAARKGCTSSQLALAWVHHQGSDVCPIPGTTKIHNFDQNVGALSVKLTPDEMSELESYASADVVQGDRYHGTFLNTWKNSETPPLSSWRSGN.

Tyrosine 70 functions as the Proton donor in the catalytic mechanism. Substrate is bound at residue histidine 138. 217–227 (SPLGRGFFSSG) provides a ligand contact to NADP(+).

Belongs to the aldo/keto reductase family.

This is Probable aldo-keto reductase 3 from Oryza sativa subsp. japonica (Rice).